Here is a 116-residue protein sequence, read N- to C-terminus: Large ribosomal subunit protein bL20 (116 aa).

Belongs to the bacterial ribosomal protein bL20 family.

Its function is as follows. Binds directly to 23S ribosomal RNA and is necessary for the in vitro assembly process of the 50S ribosomal subunit. It is not involved in the protein synthesizing functions of that subunit. The sequence is that of Large ribosomal subunit protein bL20 from Helicobacter acinonychis (strain Sheeba).